The following is a 325-amino-acid chain: CRISPR-associated endonuclease Cas1 2 (325 aa).

Mn(2+) is bound by residues Glu145, His212, and Asp225. The segment at 283-325 (EEEDPVEEDPTRPGGLWDLEGEVEGGVAYGGDDPGEGAEEPEG) is disordered. Over residues 315–325 (DPGEGAEEPEG) the composition is skewed to acidic residues.

This sequence belongs to the CRISPR-associated endonuclease Cas1 family. Homodimer, forms a heterotetramer with a Cas2 homodimer. It depends on Mg(2+) as a cofactor. Mn(2+) serves as cofactor.

Functionally, CRISPR (clustered regularly interspaced short palindromic repeat), is an adaptive immune system that provides protection against mobile genetic elements (viruses, transposable elements and conjugative plasmids). CRISPR clusters contain spacers, sequences complementary to antecedent mobile elements, and target invading nucleic acids. CRISPR clusters are transcribed and processed into CRISPR RNA (crRNA). Acts as a dsDNA endonuclease. Involved in the integration of spacer DNA into the CRISPR cassette. The polypeptide is CRISPR-associated endonuclease Cas1 2 (Thermus thermophilus (strain ATCC 27634 / DSM 579 / HB8)).